Reading from the N-terminus, the 79-residue chain is Calcium/calmodulin-dependent protein kinase II inhibitor 2 (79 aa).

The segment at 1 to 21 is disordered; sequence MSEILPYSEDKMGRFGADPEG. The inhibitory domain stretch occupies residues 43–69; the sequence is KRPPKLGQIGRAKRVVIEDDRIDDVLK.

Belongs to the CAMK2N family. In terms of assembly, interacts with CAMK2A and CAMK2B in the presence of Ca(2+)/calmodulin or after autophosphorylation.

It is found in the nucleus. It localises to the cytoplasm. Its subcellular location is the cytosol. The protein resides in the synapse. Its function is as follows. Potent and specific cellular inhibitor of CaM-kinase II (CAMK2). Traps Ca(2+)/calmodulin on CAMK2. This chain is Calcium/calmodulin-dependent protein kinase II inhibitor 2 (CAMK2N2), found in Bos taurus (Bovine).